The following is a 20-amino-acid chain: Agglutinin beta-4 chain (20 aa).

It belongs to the jacalin lectin family. Tetramer of four alpha chains associated with two or four beta chains.

Functionally, D-galactose-specific lectin, binds the T-antigen structure Gal-beta1,3-GalNAc (Thomsen-Friedenreich-antigen-specific lectin). Potent and selective stimulant of distinct T- and B-cell functions. Shows a unique ability to specifically recognize IgA-1 from human serum. The protein is Agglutinin beta-4 chain of Artocarpus integer (Jack fruit).